Reading from the N-terminus, the 466-residue chain is Putative ABC transporter ATP-binding protein MG065 (466 aa).

An ABC transporter domain is found at 233–463 (IELKNVYKYI…NLNPKQVEEI (231 aa)). 269–276 (GPSGSGKT) is an ATP binding site.

Belongs to the ABC transporter superfamily.

This chain is Putative ABC transporter ATP-binding protein MG065, found in Mycoplasma genitalium (strain ATCC 33530 / DSM 19775 / NCTC 10195 / G37) (Mycoplasmoides genitalium).